We begin with the raw amino-acid sequence, 209 residues long: Holliday junction branch migration complex subunit RuvA (209 aa).

The domain I stretch occupies residues methionine 1–serine 70. The domain II stretch occupies residues threonine 71–threonine 149. Positions proline 150–isoleucine 160 are flexible linker. Positions isoleucine 160–serine 209 are domain III.

This sequence belongs to the RuvA family. In terms of assembly, homotetramer. Forms an RuvA(8)-RuvB(12)-Holliday junction (HJ) complex. HJ DNA is sandwiched between 2 RuvA tetramers; dsDNA enters through RuvA and exits via RuvB. An RuvB hexamer assembles on each DNA strand where it exits the tetramer. Each RuvB hexamer is contacted by two RuvA subunits (via domain III) on 2 adjacent RuvB subunits; this complex drives branch migration. In the full resolvosome a probable DNA-RuvA(4)-RuvB(12)-RuvC(2) complex forms which resolves the HJ.

The protein resides in the cytoplasm. Its function is as follows. The RuvA-RuvB-RuvC complex processes Holliday junction (HJ) DNA during genetic recombination and DNA repair, while the RuvA-RuvB complex plays an important role in the rescue of blocked DNA replication forks via replication fork reversal (RFR). RuvA specifically binds to HJ cruciform DNA, conferring on it an open structure. The RuvB hexamer acts as an ATP-dependent pump, pulling dsDNA into and through the RuvAB complex. HJ branch migration allows RuvC to scan DNA until it finds its consensus sequence, where it cleaves and resolves the cruciform DNA. In Gloeothece citriformis (strain PCC 7424) (Cyanothece sp. (strain PCC 7424)), this protein is Holliday junction branch migration complex subunit RuvA.